Here is a 427-residue protein sequence, read N- to C-terminus: Peptidase B (427 aa).

K195 and D200 together coordinate Mn(2+). K207 is a catalytic residue. Residues D218, D277, and E279 each contribute to the Mn(2+) site. R281 is a catalytic residue.

The protein belongs to the peptidase M17 family. Homohexamer. The cofactor is Mn(2+).

The protein localises to the cytoplasm. It carries out the reaction Release of an N-terminal amino acid, Xaa, from a peptide or arylamide. Xaa is preferably Glu or Asp but may be other amino acids, including Leu, Met, His, Cys and Gln.. Probably plays an important role in intracellular peptide degradation. This Salmonella typhi protein is Peptidase B.